The following is a 624-amino-acid chain: Polycomb group protein EMF2A (624 aa).

The C2H2-type zinc finger occupies 338–359 (CPFCLVRCGNFKGLECHMTSSH). The tract at residues 420-445 (DAHIMESGSPEETQAESEDDVQEENE) is disordered. The span at 432–445 (TQAESEDDVQEENE) shows a compositional bias: acidic residues. Positions 474–609 (LSANRADPRN…SARTMDTCNR (136 aa)) are VEFS-box.

The protein belongs to the VEFS (VRN2-EMF2-FIS2-SU(Z)12) family. As to quaternary structure, component of the polycomb repressive complex 2 (PRC2), which methylates 'Lys-27' residues of histone H3 (H3K27me3), leading to transcriptional repression of the affected target gene. In terms of tissue distribution, widely expressed. Highly expressed in shoot apical meristem and inflorescence meristem. Expressed in roots, leaves and immature seeds.

Polycomb group (PcG) protein. PcG proteins act by forming multiprotein complexes, which are required to maintain the transcriptionally repressive state of homeotic genes throughout development. PcG proteins are not required to initiate repression, but to maintain it during later stages of development. They act via the methylation of histones, rendering chromatin heritably changed in its expressibility. This is Polycomb group protein EMF2A from Oryza sativa subsp. japonica (Rice).